Here is a 156-residue protein sequence, read N- to C-terminus: Large ribosomal subunit protein uL15 (156 aa).

The span at 1 to 16 (MVRRFKRGTKYRRGSR) shows a compositional bias: basic residues. Positions 1–37 (MVRRFKRGTKYRRGSRTHGWGRVGQHRKSGGSGGKGM) are disordered.

It belongs to the universal ribosomal protein uL15 family. In terms of assembly, part of the 50S ribosomal subunit.

In terms of biological role, binds to the 23S rRNA. The chain is Large ribosomal subunit protein uL15 from Pyrobaculum aerophilum (strain ATCC 51768 / DSM 7523 / JCM 9630 / CIP 104966 / NBRC 100827 / IM2).